Reading from the N-terminus, the 144-residue chain is Large ribosomal subunit protein uL11 (144 aa).

This sequence belongs to the universal ribosomal protein uL11 family. Part of the ribosomal stalk of the 50S ribosomal subunit. Interacts with L10 and the large rRNA to form the base of the stalk. L10 forms an elongated spine to which L12 dimers bind in a sequential fashion forming a multimeric L10(L12)X complex. One or more lysine residues are methylated.

Functionally, forms part of the ribosomal stalk which helps the ribosome interact with GTP-bound translation factors. This Saccharopolyspora erythraea (strain ATCC 11635 / DSM 40517 / JCM 4748 / NBRC 13426 / NCIMB 8594 / NRRL 2338) protein is Large ribosomal subunit protein uL11.